The following is a 428-amino-acid chain: D-inositol 3-phosphate glycosyltransferase (428 aa).

H5 contacts 1D-myo-inositol 3-phosphate. Residues 11 to 12 (QP) and G19 contribute to the UDP-N-acetyl-alpha-D-glucosamine site. Residues 16-21 (DAGGMN), K74, Y107, T131, and R151 each bind 1D-myo-inositol 3-phosphate. 3 residues coordinate UDP-N-acetyl-alpha-D-glucosamine: R225, K230, and Q283. The Mg(2+) site is built by F292, Q293, and A295. Positions 305 and 313 each coordinate UDP-N-acetyl-alpha-D-glucosamine. T319 lines the Mg(2+) pocket.

The protein belongs to the glycosyltransferase group 1 family. MshA subfamily. In terms of assembly, homodimer.

The catalysed reaction is 1D-myo-inositol 3-phosphate + UDP-N-acetyl-alpha-D-glucosamine = 1D-myo-inositol 2-acetamido-2-deoxy-alpha-D-glucopyranoside 3-phosphate + UDP + H(+). Catalyzes the transfer of a N-acetyl-glucosamine moiety to 1D-myo-inositol 3-phosphate to produce 1D-myo-inositol 2-acetamido-2-deoxy-glucopyranoside 3-phosphate in the mycothiol biosynthesis pathway. The protein is D-inositol 3-phosphate glycosyltransferase of Mycobacterium leprae (strain Br4923).